A 586-amino-acid chain; its full sequence is Major facilitator superfamily domain-containing protein 6-like (586 aa).

2 helical membrane passes run Thr-50–Ala-70 and Ala-78–Pro-98. The interval Ala-133–Ser-160 is disordered. 9 helical membrane passes run Phe-246 to Val-266, Leu-287 to Gly-307, Gly-326 to Cys-346, Ile-361 to Ile-381, Glu-400 to Phe-420, Leu-433 to Trp-455, Ser-456 to Gly-476, Phe-499 to Ser-519, and Ala-521 to Ile-541.

It belongs to the major facilitator superfamily. MFSD6 family.

Its subcellular location is the membrane. This is Major facilitator superfamily domain-containing protein 6-like (MFSD6L) from Homo sapiens (Human).